Consider the following 516-residue polypeptide: Keratin, type II cuticular Hb2 (516 aa).

Residues 1–118 are head; it reads MSCRNFQLSP…PTVQRVKRDE (118 aa). Residues 118 to 429 form the IF rod domain; it reads EKEQIKCLNN…RLLEGEEHRL (312 aa). Positions 119–153 are coil 1A; sequence KEQIKCLNNRFASFINKVRFLEQKNKLLETKWNFM. A linker 1 region spans residues 154–163; sequence QQQRSCQSNM. The segment at 164–264 is coil 1B; it reads EPLFEGYICA…FEEEIGLLQS (101 aa). Residues 265–281 are linker 12; it reads QISETSVIVKMDNSREL. The segment at 282-425 is coil 2; that stretch reads DVDGIVAEIK…ATYRRLLEGE (144 aa). Residues 426–516 are tail; sequence EHRLCEGIGP…VGVGSNSCSR (91 aa).

The protein belongs to the intermediate filament family. Heterotetramer of two type I and two type II keratins.

The protein is Keratin, type II cuticular Hb2 (Krt82) of Mus musculus (Mouse).